A 557-amino-acid polypeptide reads, in one-letter code: MNKLRSSAITQGVQRSPNRSMLRAVGFNDEDFNKPIIGVANGYSTITPCNMGLNKLALKAEESIKRSGGMPQMFGTITVSDGISMGTEGMKYSLVSREVIADSIETACNAQSMDGVLAIGGCDKNMPGAMIAIARMNIPSIFIYGGTIKPGKLYGEDLTVVSAFEAVGQLTSGKITEERLIQVEKNCIPGAGSCGGMFTANTMSAVIEVLGLSLPHSSTMAAEDLEKELSADKSAEILVSAIKKDIRPLDLMTKKAFENAISVIMAIGGSTNAVLHILAIANTAGIDININDFERIRQKVPVICDLKPSGKYVTVDLHKAGGIPQVMKILLNAGLIHGDCKNIEGKTISEYLQNIPDKPPTNQNVIRDIHDPLYKKGHLAILKGNLASEGSVAKISGVKNPVLTGPAKIFESEEDCLKSILNNDIKAGDVVVIRNEGPVGGPGMREMLAPTSAIVGQGLGEKVALITDGRFSGGTYGLVVGHIAPEAAVGGNIALIKEGDLITVDAVKQLIEVNLSDEELKKRKKDWVKPIQKYKRGILSKYSRIVSTSSLGAVTDL.

Position 49 (C49) interacts with [2Fe-2S] cluster. D81 contributes to the Mg(2+) binding site. C122 is a binding site for [2Fe-2S] cluster. The Mg(2+) site is built by D123 and K124. N6-carboxylysine is present on K124. Residue C194 participates in [2Fe-2S] cluster binding. E446 contributes to the Mg(2+) binding site. S472 serves as the catalytic Proton acceptor.

This sequence belongs to the IlvD/Edd family. In terms of assembly, homodimer. Requires [2Fe-2S] cluster as cofactor. The cofactor is Mg(2+).

It carries out the reaction (2R)-2,3-dihydroxy-3-methylbutanoate = 3-methyl-2-oxobutanoate + H2O. The catalysed reaction is (2R,3R)-2,3-dihydroxy-3-methylpentanoate = (S)-3-methyl-2-oxopentanoate + H2O. Its pathway is amino-acid biosynthesis; L-isoleucine biosynthesis; L-isoleucine from 2-oxobutanoate: step 3/4. The protein operates within amino-acid biosynthesis; L-valine biosynthesis; L-valine from pyruvate: step 3/4. Functions in the biosynthesis of branched-chain amino acids. Catalyzes the dehydration of (2R,3R)-2,3-dihydroxy-3-methylpentanoate (2,3-dihydroxy-3-methylvalerate) into 2-oxo-3-methylpentanoate (2-oxo-3-methylvalerate) and of (2R)-2,3-dihydroxy-3-methylbutanoate (2,3-dihydroxyisovalerate) into 2-oxo-3-methylbutanoate (2-oxoisovalerate), the penultimate precursor to L-isoleucine and L-valine, respectively. This Prochlorococcus marinus (strain MIT 9301) protein is Dihydroxy-acid dehydratase.